A 215-amino-acid chain; its full sequence is MOB kinase activator-like 1A (215 aa).

The segment at 1 to 27 is disordered; sequence MSLFGLGRNQKTFRPKKSAPSGSKGAQ. Zn(2+) contacts are provided by Cys79, Cys84, His161, and His166.

Belongs to the MOB1/phocein family. As to quaternary structure, interacts with SIK1 at the plasma membrane and in the nucleus. Constitutively expressed. In 3- to 4-day-old seedlings, expression is high in the shoot apical meristem and along the vasculature in cotyledons, hypocotyls and roots. At the root tip, expression is detected in columella and lateral root cap cells as well as in the stem cell niche around the quiescent center (QC). The levels of expression decrease progressively in the meristematic zone from the root tip towards the base of the root, becoming stronger again in the elongation zone. In flowers, expression appears localized in ovules and pollen.

The protein resides in the nucleus. Its subcellular location is the cell membrane. It is found in the vacuole membrane. Plays a key role in regulation of cell expansion and cell division. Required for proper plant development, the correct patterning of the root meristem and the control of root growth. Involved in both sporogenesis and gametogenesis. The protein is MOB kinase activator-like 1A of Arabidopsis thaliana (Mouse-ear cress).